The primary structure comprises 95 residues: Co-chaperonin GroES (95 aa).

Belongs to the GroES chaperonin family. Heptamer of 7 subunits arranged in a ring. Interacts with the chaperonin GroEL.

Its subcellular location is the cytoplasm. In terms of biological role, together with the chaperonin GroEL, plays an essential role in assisting protein folding. The GroEL-GroES system forms a nano-cage that allows encapsulation of the non-native substrate proteins and provides a physical environment optimized to promote and accelerate protein folding. GroES binds to the apical surface of the GroEL ring, thereby capping the opening of the GroEL channel. This is Co-chaperonin GroES from Desulfotalea psychrophila (strain LSv54 / DSM 12343).